The chain runs to 333 residues: Holliday junction branch migration complex subunit RuvB (333 aa).

Positions 1–173 are large ATPase domain (RuvB-L); it reads MTAPENLDAA…FGIIEHLEYY (173 aa). ATP contacts are provided by residues leucine 11, arginine 12, glycine 53, lysine 56, threonine 57, threonine 58, 120–122, arginine 163, tyrosine 173, and arginine 210; that span reads EDF. Threonine 57 provides a ligand contact to Mg(2+). The small ATPAse domain (RuvB-S) stretch occupies residues 174-244; that stretch reads TAEEIATNLL…RAQSALDKLG (71 aa). Residues 247–333 are head domain (RuvB-H); the sequence is SAGLDDRDKK…IDDGNGIFLN (87 aa). Residues arginine 302 and arginine 307 each coordinate DNA.

It belongs to the RuvB family. Homohexamer. Forms an RuvA(8)-RuvB(12)-Holliday junction (HJ) complex. HJ DNA is sandwiched between 2 RuvA tetramers; dsDNA enters through RuvA and exits via RuvB. An RuvB hexamer assembles on each DNA strand where it exits the tetramer. Each RuvB hexamer is contacted by two RuvA subunits (via domain III) on 2 adjacent RuvB subunits; this complex drives branch migration. In the full resolvosome a probable DNA-RuvA(4)-RuvB(12)-RuvC(2) complex forms which resolves the HJ.

Its subcellular location is the cytoplasm. The catalysed reaction is ATP + H2O = ADP + phosphate + H(+). The RuvA-RuvB-RuvC complex processes Holliday junction (HJ) DNA during genetic recombination and DNA repair, while the RuvA-RuvB complex plays an important role in the rescue of blocked DNA replication forks via replication fork reversal (RFR). RuvA specifically binds to HJ cruciform DNA, conferring on it an open structure. The RuvB hexamer acts as an ATP-dependent pump, pulling dsDNA into and through the RuvAB complex. RuvB forms 2 homohexamers on either side of HJ DNA bound by 1 or 2 RuvA tetramers; 4 subunits per hexamer contact DNA at a time. Coordinated motions by a converter formed by DNA-disengaged RuvB subunits stimulates ATP hydrolysis and nucleotide exchange. Immobilization of the converter enables RuvB to convert the ATP-contained energy into a lever motion, pulling 2 nucleotides of DNA out of the RuvA tetramer per ATP hydrolyzed, thus driving DNA branch migration. The RuvB motors rotate together with the DNA substrate, which together with the progressing nucleotide cycle form the mechanistic basis for DNA recombination by continuous HJ branch migration. Branch migration allows RuvC to scan DNA until it finds its consensus sequence, where it cleaves and resolves cruciform DNA. The sequence is that of Holliday junction branch migration complex subunit RuvB from Deinococcus radiodurans (strain ATCC 13939 / DSM 20539 / JCM 16871 / CCUG 27074 / LMG 4051 / NBRC 15346 / NCIMB 9279 / VKM B-1422 / R1).